Here is a 180-residue protein sequence, read N- to C-terminus: ATP-dependent protease subunit HslV (180 aa).

Residue threonine 7 is part of the active site. Glycine 165, cysteine 168, and threonine 171 together coordinate Na(+).

This sequence belongs to the peptidase T1B family. HslV subfamily. As to quaternary structure, a double ring-shaped homohexamer of HslV is capped on each side by a ring-shaped HslU homohexamer. The assembly of the HslU/HslV complex is dependent on binding of ATP.

Its subcellular location is the cytoplasm. It carries out the reaction ATP-dependent cleavage of peptide bonds with broad specificity.. Allosterically activated by HslU binding. Functionally, protease subunit of a proteasome-like degradation complex believed to be a general protein degrading machinery. This chain is ATP-dependent protease subunit HslV, found in Bacillus cytotoxicus (strain DSM 22905 / CIP 110041 / 391-98 / NVH 391-98).